Here is a 337-residue protein sequence, read N- to C-terminus: Ornithine carbamoyltransferase (337 aa).

Carbamoyl phosphate-binding positions include 56–59 (STRT), Q83, R107, and 134–137 (HPTQ). L-ornithine is bound by residues N168, D232, and 236-237 (SM). Carbamoyl phosphate is bound by residues 274-275 (CL) and R320.

Belongs to the aspartate/ornithine carbamoyltransferase superfamily. OTCase family.

The protein localises to the cytoplasm. The catalysed reaction is carbamoyl phosphate + L-ornithine = L-citrulline + phosphate + H(+). It functions in the pathway amino-acid biosynthesis; L-arginine biosynthesis; L-arginine from L-ornithine and carbamoyl phosphate: step 1/3. Its function is as follows. Reversibly catalyzes the transfer of the carbamoyl group from carbamoyl phosphate (CP) to the N(epsilon) atom of ornithine (ORN) to produce L-citrulline. In Shigella flexneri, this protein is Ornithine carbamoyltransferase (argI).